Reading from the N-terminus, the 239-residue chain is Endoglucanase A (239 aa).

An N-terminal signal peptide occupies residues 1–16; the sequence is MKLSMTLSLFAATAMG.

This sequence belongs to the glycosyl hydrolase 12 (cellulase H) family.

The catalysed reaction is Endohydrolysis of (1-&gt;4)-beta-D-glucosidic linkages in cellulose, lichenin and cereal beta-D-glucans.. Functionally, has carboxylmethylcellulase activity. The protein is Endoglucanase A (cekA) of Aspergillus kawachii (strain NBRC 4308) (White koji mold).